The sequence spans 244 residues: DSLSYYHSPADSFSSMGSPVNTQDFCADLSVSSANFIPTETAISTSPDLQWLVQPTLVSSVAPSQTRAPHPYGLPTQSAGAYARAGMVKTVSGGRAQSIGRRGKVEQLSPEEEVKRRIRRERNKMAAAKCRNRRRELTDTLQAETDQLEDEKSALQTEIANLLKEKEKLEFILAAHRPACKIPDDLGFPEEMSVASLDLTGGLLPLLNDPEPKPSLEPVKSSFDDFLFPASSGHSGFISMAGWQ.

Residues 1–236 (DSLSYYHSPA…LFPASSGHSG (236 aa)) are transforming protein v-Fos. The 64-residue stretch at 113 to 176 (EVKRRIRRER…EKLEFILAAH (64 aa)) folds into the bZIP domain. The basic motif stretch occupies residues 115-135 (KRRIRRERNKMAAAKCRNRRR). A leucine-zipper region spans residues 141-169 (LQAETDQLEDEKSALQTEIANLLKEKEKL). Residues 237–244 (FISMAGWQ) are transforming protein v-Fox.

The protein belongs to the bZIP family. Fos subfamily.

The protein resides in the host nucleus. The sequence is that of Transforming protein v-Fos/v-Fox (FOS-FOX) from Mus musculus (Mouse).